A 414-amino-acid polypeptide reads, in one-letter code: EARP and GARP complex-interacting protein 1 (414 aa).

At M1 the chain carries N-acetylmethionine. 4 WD repeats span residues 159 to 199, 209 to 249, 253 to 293, and 297 to 337; these read TAHG…SQAV, KGQL…QIYC, AHGQ…EPVK, and EHSH…SEPF. Residues 337 to 362 form a disordered region; the sequence is FGHLVDDDDISDQEDHRSEEKSKEPL. A Phosphoserine modification is found at S347. Residues 349-362 are compositionally biased toward basic and acidic residues; the sequence is QEDHRSEEKSKEPL. The stretch at 372-412 is one WD 5 repeat; sequence EHEDSVYAVDWSSADPWLFASLSYDGRLVINRVPRALKYHI.

The protein belongs to the WD repeat EIPR1 family. In terms of assembly, interacts with two multisubunit tethering complexes: EARP composed of VPS50, VPS51, VPS52 and VPS53 subunits and GARP complex composed of VPS51, VPS52, VPS53 and VPS54 subunits. Interacts with SNAP29.

Its subcellular location is the golgi apparatus. The protein resides in the trans-Golgi network. Functionally, acts as a component of endosomal retrieval machinery that is involved in protein transport from early endosomes to either recycling endosomes or the trans-Golgi network. Mediates the recruitment of Golgi-associated retrograde protein (GARP) complex to the trans-Golgi network and controls early endosome-to-Golgi transport of internalized protein. Promotes the recycling of internalized transferrin receptor (TFRC) to the plasma membrane through interaction with endosome-associated recycling protein (EARP) complex. Controls proper insulin distribution and secretion, and retention of cargo in mature dense core vesicles. Required for the stability of the endosome-associated retrograde protein (EARP) complex subunits and for proper localization and association of EARP with membranes. The polypeptide is EARP and GARP complex-interacting protein 1 (Pongo abelii (Sumatran orangutan)).